Here is a 418-residue protein sequence, read N- to C-terminus: Ig-like V-type domain-containing protein FAM187A (418 aa).

Residues 1-18 form the signal peptide; sequence MRLAPTTVLLWAWGSLQA. Over 19-376 the chain is Extracellular; it reads FEIVEKENIF…ASLSDPETRT (358 aa). An Ig-like V-type domain is found at 267 to 361; that stretch reads PWVPQVPIQF…IAGFRLGVTS (95 aa). Cys289 and Cys345 are joined by a disulfide. The N-linked (GlcNAc...) asparagine glycan is linked to Asn317. Residues 377-397 traverse the membrane as a helical segment; it reads AVELTLIGYLLIAVVFVTIHL. The Cytoplasmic segment spans residues 398–418; it reads CRCCCQSRCCPNFSAQTLLQL.

Belongs to the FAM187 family.

The protein localises to the membrane. This chain is Ig-like V-type domain-containing protein FAM187A (Fam187a), found in Rattus norvegicus (Rat).